Consider the following 207-residue polypeptide: Large ribosomal subunit protein bL25 (207 aa).

The segment at 1–20 (MANHQIKAQRRKDEGKGASR) is disordered.

Belongs to the bacterial ribosomal protein bL25 family. CTC subfamily. Part of the 50S ribosomal subunit; part of the 5S rRNA/L5/L18/L25 subcomplex. Contacts the 5S rRNA. Binds to the 5S rRNA independently of L5 and L18.

In terms of biological role, this is one of the proteins that binds to the 5S RNA in the ribosome where it forms part of the central protuberance. This chain is Large ribosomal subunit protein bL25, found in Xylella fastidiosa (strain M23).